We begin with the raw amino-acid sequence, 278 residues long: NAD kinase (278 aa).

Residue Asp-56 is the Proton acceptor of the active site. Residues 56-57 (DG), 132-133 (NE), Arg-158, Asp-160, and 171-176 (TAYNKS) each bind NAD(+).

The protein belongs to the NAD kinase family. It depends on a divalent metal cation as a cofactor.

Its subcellular location is the cytoplasm. The enzyme catalyses NAD(+) + ATP = ADP + NADP(+) + H(+). Functionally, involved in the regulation of the intracellular balance of NAD and NADP, and is a key enzyme in the biosynthesis of NADP. Catalyzes specifically the phosphorylation on 2'-hydroxyl of the adenosine moiety of NAD to yield NADP. The sequence is that of NAD kinase from Streptococcus agalactiae serotype III (strain NEM316).